Reading from the N-terminus, the 676-residue chain is MAAAKVALTKRADPAELKAIFLKYASIEKNGEFFMSPHDFVTRYLNIFGESQPNPKTVELLSGVVDQTKDGLISFQEFVAFESVLCAPDALFMVAFQLFDKAGKGEVTFEDVKQIFGQTTIHQHIPFNWDSEFVQLHFGKERKRHLTYAEFTQFLLEIQLEHAKQAFVQRDNAKTGKVSAIDFRDIMVTIRPHVLTPFVEECLVAAAGGTRSHQVSFSYFNGFNSLLNNMELIRKIYSTLAGNRKDVEVTKEEFALAAQKFGQVTPMEVDILFQLADLYEPRGRMTLADIERIAPLEEGMLPFNLAEAQRQQKASGDAARPFLLQLAESAYRFGLGSIAGAVGATAVYPIDLVKTRMQNQRSTGSFVGELMYKNSFDCFKKVLRYEGFFGLYRGLLPQLLGVAPEKAIKLTVNDFVRDKFMHKDGSVPLLAEIFAGGCAGGSQVIFTNPLEIVKIRLQVAGEITTGPRVSALSVVRDLGFFGIYKGAKACFLRDIPFSAIYFPCYAHVKASFANEDGQVSPGSLLLAGAIAGMPAASLVTPADVIKTRLQVAARAGQTTYNGVTDCFRKILREEGPKALWKGVAARVFRSSPQFGVTLLTYELLQRWFYVDFGGVKPVGSEPVPKSRITLPAPNPDHVGGYKLAVATFAGIENKFGLYLPLFKPSASTSKVTAGDS.

Position 2 is an N-acetylalanine (alanine 2). A regulatory N-terminal domain region spans residues 2-295 (AAAKVALTKR…TLADIERIAP (294 aa)). At 2 to 332 (AAAKVALTKR…LLQLAESAYR (331 aa)) the chain is on the mitochondrial intermembrane side. Lysine 18 is subject to N6-acetyllysine. 4 consecutive EF-hand domains span residues 51 to 86 (SQPNPKTVELLSGVVDQTKDGLISFQEFVAFESVLC), 87 to 122 (APDALFMVAFQLFDKAGKGEVTFEDVKQIFGQTTIH), 123 to 157 (QHIPFNWDSEFVQLHFGKERKRHLTYAEFTQFLLE), and 158 to 193 (IQLEHAKQAFVQRDNAKTGKVSAIDFRDIMVTIRPH). Ca(2+)-binding residues include aspartate 66, threonine 68, aspartate 70, leucine 72, and glutamate 77. Positions 296 to 311 (LEEGMLPFNLAEAQRQ) are linker loop domain. The interval 322-613 (FLLQLAESAY…LQRWFYVDFG (292 aa)) is carrier domain. Solcar repeat units lie at residues 327–419 (AESA…VRDK), 427–511 (VPLL…VKAS), and 519–607 (VSPG…LQRW). Residues 333 to 350 (FGLGSIAGAVGATAVYPI) traverse the membrane as a helical segment. Topologically, residues 351–393 (DLVKTRMQNQRSTGSFVGELMYKNSFDCFKKVLRYEGFFGLYR) are mitochondrial matrix. Lysine 354 and lysine 373 each carry N6-acetyllysine. The chain crosses the membrane as a helical span at residues 394 to 413 (GLLPQLLGVAPEKAIKLTVN). At 414 to 436 (DFVRDKFMHKDGSVPLLAEIFAG) the chain is on the mitochondrial intermembrane side. A helical membrane pass occupies residues 437–450 (GCAGGSQVIFTNPL). Over 451 to 485 (EIVKIRLQVAGEITTGPRVSALSVVRDLGFFGIYK) the chain is Mitochondrial matrix. Lysine 454 is modified (N6-methyllysine). Lysine 485 carries the post-translational modification N6-acetyllysine; alternate. The residue at position 485 (lysine 485) is an N6-succinyllysine; alternate. Residues 486–505 (GAKACFLRDIPFSAIYFPCY) traverse the membrane as a helical segment. The Mitochondrial intermembrane portion of the chain corresponds to 506 to 524 (AHVKASFANEDGQVSPGSL). The chain crosses the membrane as a helical span at residues 525-542 (LLAGAIAGMPAASLVTPA). The Mitochondrial matrix portion of the chain corresponds to 543–581 (DVIKTRLQVAARAGQTTYNGVTDCFRKILREEGPKALWK). An N6-succinyllysine modification is found at lysine 581. Residues 582 to 601 (GVAARVFRSSPQFGVTLLTY) traverse the membrane as a helical segment. The Mitochondrial intermembrane segment spans residues 602-676 (ELLQRWFYVD…STSKVTAGDS (75 aa)). Residues 614–676 (GVKPVGSEPV…STSKVTAGDS (63 aa)) are C-terminal domain. Lysine 663 is modified (N6-acetyllysine). Phosphoserine is present on serine 667.

Belongs to the mitochondrial carrier (TC 2.A.29) family. Homodimer (via N-terminus). In terms of tissue distribution, at 10.5 dpc, expressed in branchial arches, a well as in the limb and tail buds. At 13.5 dpc expression is predominant in epithelial structures and the forebrain, kidney and liver. Expression in liver is maintained into adulthood.

It localises to the mitochondrion inner membrane. It carries out the reaction L-aspartate(in) + L-glutamate(out) + H(+)(out) = L-aspartate(out) + L-glutamate(in) + H(+)(in). The catalysed reaction is 3-sulfino-L-alanine(out) + L-glutamate(in) + H(+)(in) = 3-sulfino-L-alanine(in) + L-glutamate(out) + H(+)(out). The enzyme catalyses 3-sulfino-L-alanine(out) + L-aspartate(in) = 3-sulfino-L-alanine(in) + L-aspartate(out). Its function is as follows. Mitochondrial electrogenic aspartate/glutamate antiporter that favors efflux of aspartate and entry of glutamate and proton within the mitochondria as part of the malate-aspartate shuttle. Also mediates the uptake of L-cysteinesulfinate (3-sulfino-L-alanine) by mitochondria in exchange of L-glutamate and proton. Can also exchange L-cysteinesulfinate with aspartate in their anionic form without any proton translocation. Lacks transport activity towards gamma-aminobutyric acid (GABA). The polypeptide is Electrogenic aspartate/glutamate antiporter SLC25A13, mitochondrial (Mus musculus (Mouse)).